A 317-amino-acid chain; its full sequence is Serpentine receptor class delta-26 (317 aa).

7 helical membrane passes run 5-25 (LLHT…MYLA), 38-58 (AIIT…FFVM), 83-103 (ACYV…IWMI), 122-142 (SLVF…AAWI), 176-196 (ITLI…YAWI), 227-247 (FQVF…AMFG), and 258-278 (LVSI…ILFV).

This sequence belongs to the nematode receptor-like protein srd family.

It is found in the membrane. The sequence is that of Serpentine receptor class delta-26 (srd-26) from Caenorhabditis elegans.